The following is a 483-amino-acid chain: FAD-linked oxidoreductase easE (483 aa).

Residues 10–193 (QGRLPLYSAV…TEATVRVFSD (184 aa)) form the FAD-binding PCMH-type domain.

The protein belongs to the oxygen-dependent FAD-linked oxidoreductase family. FAD is required as a cofactor.

Its pathway is alkaloid biosynthesis; ergot alkaloid biosynthesis. Functionally, FAD-linked oxidoreductase; part of the gene cluster that mediates the biosynthesis of fungal ergot alkaloid. DmaW catalyzes the first step of ergot alkaloid biosynthesis by condensing dimethylallyl diphosphate (DMAP) and tryptophan to form 4-dimethylallyl-L-tryptophan. The second step is catalyzed by the methyltransferase easF that methylates 4-dimethylallyl-L-tryptophan in the presence of S-adenosyl-L-methionine, resulting in the formation of 4-dimethylallyl-L-abrine. The catalase easC and the FAD-dependent oxidoreductase easE then transform 4-dimethylallyl-L-abrine to chanoclavine-I which is further oxidized by easD in the presence of NAD(+), resulting in the formation of chanoclavine-I aldehyde. Agroclavine dehydrogenase easG then mediates the conversion of chanoclavine-I aldehyde to agroclavine via a non-enzymatic adduct reaction: the substrate is an iminium intermediate that is formed spontaneously from chanoclavine-I aldehyde in the presence of glutathione. The presence of easA is not required to complete this reaction. Further conversion of agroclavine to paspalic acid is a two-step process involving oxidation of agroclavine to elymoclavine and of elymoclavine to paspalic acid, the second step being performed by the elymoclavine oxidase cloA. Paspalic acid is then further converted to D-lysergic acid. Ergopeptines are assembled from D-lysergic acid and three different amino acids by the D-lysergyl-peptide-synthetases composed each of a monomudular and a trimodular nonribosomal peptide synthetase subunit. LpsB and lpsC encode the monomodular subunits responsible for D-lysergic acid activation and incorporation into the ergopeptine backbone. LpsA1 and A2 subunits encode the trimodular nonribosomal peptide synthetase assembling the tripeptide portion of ergopeptines. LpsA1 is responsible for formation of the major ergopeptine, ergotamine, and lpsA2 for alpha-ergocryptine, the minor ergopeptine of the total alkaloid mixture elaborated by C.purpurea. D-lysergyl-tripeptides are assembled by the nonribosomal peptide synthetases and released as N-(D-lysergyl-aminoacyl)-lactams. Cyclolization of the D-lysergyl-tripeptides is performed by the Fe(2+)/2-ketoglutarate-dependent dioxygenase easH which introduces a hydroxyl group into N-(D-lysergyl-aminoacyl)-lactam at alpha-C of the aminoacyl residue followed by spontaneous condensation with the terminal lactam carbonyl group. The sequence is that of FAD-linked oxidoreductase easE from Claviceps purpurea (Ergot fungus).